The chain runs to 130 residues: Fumarate reductase subunit C (130 aa).

3 consecutive transmembrane segments (helical) span residues 34-54, 60-80, and 109-129; these read VPAV…KGGV, FVGF…LLAA, and IVKT…AVAL.

The protein belongs to the FrdC family. As to quaternary structure, part of an enzyme complex containing four subunits: a flavoprotein (FrdA), an iron-sulfur protein (FrdB), and two hydrophobic anchor proteins (FrdC and FrdD).

The protein resides in the cell inner membrane. In terms of biological role, two distinct, membrane-bound, FAD-containing enzymes are responsible for the catalysis of fumarate and succinate interconversion; fumarate reductase is used in anaerobic growth, and succinate dehydrogenase is used in aerobic growth. Anchors the catalytic components of the fumarate reductase complex to the cell inner membrane, binds quinones. The polypeptide is Fumarate reductase subunit C (Serratia proteamaculans (strain 568)).